A 212-amino-acid chain; its full sequence is Thymidylate kinase (212 aa).

Residue 11 to 18 (GMEGAGKS) participates in ATP binding.

It belongs to the thymidylate kinase family.

It catalyses the reaction dTMP + ATP = dTDP + ADP. Functionally, phosphorylation of dTMP to form dTDP in both de novo and salvage pathways of dTTP synthesis. The protein is Thymidylate kinase of Colwellia psychrerythraea (strain 34H / ATCC BAA-681) (Vibrio psychroerythus).